We begin with the raw amino-acid sequence, 303 residues long: 4-diphosphocytidyl-2-C-methyl-D-erythritol kinase (303 aa).

Residue K24 is part of the active site. Position 111–121 (111–121 (PIASGIGGGSA)) interacts with ATP. Residue D153 is part of the active site.

It belongs to the GHMP kinase family. IspE subfamily.

It catalyses the reaction 4-CDP-2-C-methyl-D-erythritol + ATP = 4-CDP-2-C-methyl-D-erythritol 2-phosphate + ADP + H(+). The protein operates within isoprenoid biosynthesis; isopentenyl diphosphate biosynthesis via DXP pathway; isopentenyl diphosphate from 1-deoxy-D-xylulose 5-phosphate: step 3/6. Its function is as follows. Catalyzes the phosphorylation of the position 2 hydroxy group of 4-diphosphocytidyl-2C-methyl-D-erythritol. This Rhizobium johnstonii (strain DSM 114642 / LMG 32736 / 3841) (Rhizobium leguminosarum bv. viciae) protein is 4-diphosphocytidyl-2-C-methyl-D-erythritol kinase.